The sequence spans 662 residues: Forkhead box protein O1 (662 aa).

Disordered stretches follow at residues 1–62 and 122–165; these read MAEA…PSAS and GCLH…SRRN. A Phosphothreonine; by PKB/AKT1 or PKB/AKT2 and SGK1 modification is found at threonine 24. Low complexity predominate over residues 33–62; the sequence is SQSNSATSSPAPSGGAAANPDAAAGLPSAS. Over residues 126–146 the composition is skewed to pro residues; it reads PAPPQQPPPPGPLSQHPPVPP. Positions 167–261 form a DNA-binding region, fork-head; that stretch reads WGNLSYADLI…KSGKSPRRRA (95 aa). DNA-binding regions lie at residues 218-225 and 241-244; these read NSIRHNLS and SSWW. Serine 219 carries the post-translational modification Phosphoserine; by STK4/MST1. Residues serine 225, serine 241, and serine 242 each carry the phosphoserine modification. The disordered stretch occupies residues 241 to 342; it reads SSWWMLNPEG…GRLSPIMTEQ (102 aa). Lysine 252 and lysine 255 each carry N6-acetyllysine. Serine 256 bears the Phosphoserine; by CDK1 mark. Arginine 258 and arginine 260 each carry omega-N-methylarginine; by PRMT1. Residues 258-260 carry the Nuclear localization signal motif; the sequence is RRR. A Phosphoserine; by PKB/AKT1 and SGK1 modification is found at serine 263. N6-acetyllysine occurs at positions 269, 272, and 281. Basic residues predominate over residues 271–282; the sequence is AKSRGRAAKKKA. The segment at 290-570 is sufficient for interaction with NLK; the sequence is GAGDSPGSQF…RLTQEKTALQ (281 aa). A phosphoserine mark is found at serine 294 and serine 305. Residues 316 to 333 show a composition bias toward polar residues; the sequence is NWSTFRPRTSSNASTISG. Serine 326 bears the Phosphoserine; by PKB/AKT1 mark. Serine 329 carries the post-translational modification Phosphoserine; by CK1 and SGK1. Serine 332 is subject to Phosphoserine; by CK1. Serine 336 is modified (phosphoserine; by DYRK1A). Threonine 340 carries the phosphothreonine modification. A required for interaction with RUNX2 region spans residues 370–466; the sequence is SEISNPENME…GGMAQYNCAA (97 aa). Lysine 430 is modified (N6-acetyllysine). Residues 469-473 carry the Required for interaction with SIRT1 motif; sequence LKELL.

In terms of assembly, interacts with LRPPRC. Interacts with RUNX2; the interaction inhibits RUNX2 transcriptional activity and mediates the IGF1/insulin-dependent BGLAP expression in osteoblasts Interacts with PPP2R1A; the interaction regulates the dephosphorylation of FOXO1 at Thr-24 and Ser-263 leading to its nuclear import. Interacts with NLK. Interacts with SIRT1; the interaction results in the deacetylation of FOXO1 leading to activation of FOXO1-mediated transcription of genes involved in DNA repair and stress resistance. Binds to CDK1. Interacts with the 14-3-3 proteins, YWHAG and YWHAZ; the interactions require insulin-stimulated phosphorylation on Thr-24, promote nuclear exit and loss of transcriptional activity. Interacts with SKP2; the interaction ubiquitinates FOXO1 leading to its proteasomal degradation. The interaction requires the presence of KRIT1. Interacts (via the C-terminal half) with ATF4 (via its DNA binding domain); the interaction occurs in osteoblasts, regulates glucose homeostasis via suppression of beta-cell proliferation and subsequent decrease in insulin production. Interacts with PRMT1; the interaction methylates FOXO1, prevents PKB/AKT1 phosphorylation and retains FOXO1 in the nucleus. Interacts with EP300 and CREBBP; the interactions acetylate FOXO1. Interacts with SIRT2; the interaction is disrupted in response to oxidative stress or serum deprivation, leading to increased level of acetylated FOXO1, which promotes stress-induced autophagy by stimulating E1-like activating enzyme ATG7. Interacts (acetylated form) with ATG7; the interaction is increased in response to oxidative stress or serum deprivation and promotes the autophagic process leading to cell death. Interacts (acetylated form) with PPARG. Interacts with XBP1; this interaction is direct and leads to FOXO1 ubiquitination and degradation via the proteasome pathway. Interacts (via the Fork-head domain) with CEBPA; the interaction increases when FOXO1 is deacetylated. Interacts with WDFY2. Forms a complex with WDFY2 and AKT1. Interacts with CRY1. Interacts with PPIA/CYPA; the interaction promotes FOXO1 dephosphorylation, nuclear accumulation and transcriptional activity. Interacts with TOX4; FOXO1 is required for full induction of TOX4-dependent activity and the interaction is inhibited by insulin. Interacts (when phosphorylated on Ser-263) with STUB1/CHIP. Post-translationally, phosphorylation by NLK promotes nuclear export and inhibits the transcriptional activity. In response to growth factors, phosphorylation on Thr-24, Ser-263 and Ser-326 by PKB/AKT1 promotes nuclear export and inactivation of transactivational activity. Phosphorylation on Thr-24 is required for binding 14-3-3 proteins. Phosphorylation of Ser-263 decreases DNA-binding activity and promotes the phosphorylation of Thr-24 and Ser-326, permitting phosphorylation of Ser-329 and Ser-332, probably by CDK1, leading to nuclear exclusion and loss of function. Stress signals, such as response to oxygen or nitric oxide, attenuate the PKB/AKT1-mediated phosphorylation leading to nuclear retention. Phosphorylation of Ser-336 is independent of IGF1 and leads to reduced function. Dephosphorylated on Thr-24 and Ser-263 by PP2A in beta-cells under oxidative stress leading to nuclear retention. Phosphorylation of Ser-256 by CDK1 disrupts binding of 14-3-3 proteins leading to nuclear accumulation and has no effect on DNA binding nor transcriptional activity. Phosphorylation by STK4/MST1 on Ser-219, upon oxidative stress, inhibits binding to 14-3-3 proteins and nuclear export. PPIA/CYPA promotes its dephosphorylation on Ser-263. Ubiquitinated by SKP2. Ubiquitination leads to proteasomal degradation. Ubiquitinated by STUB1/CHIP; when Ser-263 is phosphorylated. In terms of processing, methylation inhibits AKT1-mediated phosphorylation at Ser-263 and is increased by oxidative stress. Post-translationally, acetylated. Acetylation at Lys-269 and Lys-281 are necessary for autophagic cell death induction. Deacetylated by SIRT2 in response to oxidative stress or serum deprivation, thereby negatively regulating FOXO1-mediated autophagic cell death. Once in the nucleus, acetylated by CREBBP/EP300. Acetylation diminishes the interaction with target DNA and attenuates the transcriptional activity. It increases the phosphorylation at Ser-263. Deacetylation by SIRT1 results in reactivation of the transcriptional activity. Oxidative stress by hydrogen peroxide treatment appears to promote deacetylation and uncoupling of insulin-induced phosphorylation. By contrast, resveratrol acts independently of acetylation. Acetylated at Lys-430, promoting its localization to the nucleus and transcription factor activity. Deacetylation at Lys-430 by SIRT6, promotes its translocation into the cytoplasm, preventing its transcription factor activity. Deacetylation and subsequent inhibition by SIRT6 has different effects depending on cell types: it inhibits gluconeogenesis in hepatocytes, promotes glucose sensing in pancreatic beta-cells and regulates lipid catabolism in brown adipocytes. As to expression, highly in subcutaneous adipose and visceral adipose tissues. Levels higher in piglets than in adults. Also expressed at lower levels in liver and muscle.

Its subcellular location is the cytoplasm. It is found in the nucleus. Transcription factor that is the main target of insulin signaling and regulates metabolic homeostasis in response to oxidative stress. Binds to the insulin response element (IRE) with consensus sequence 5'-TT[G/A]TTTTG-3' and the related Daf-16 family binding element (DBE) with consensus sequence 5'-TT[G/A]TTTAC-3'. Activity suppressed by insulin. Main regulator of redox balance and osteoblast numbers and controls bone mass. Orchestrates the endocrine function of the skeleton in regulating glucose metabolism. Also acts as a key regulator of chondrogenic commitment of skeletal progenitor cells in response to lipid availability: when lipids levels are low, translocates to the nucleus and promotes expression of SOX9, which induces chondrogenic commitment and suppresses fatty acid oxidation. Acts synergistically with ATF4 to suppress osteocalcin/BGLAP activity, increasing glucose levels and triggering glucose intolerance and insulin insensitivity. Also suppresses the transcriptional activity of RUNX2, an upstream activator of osteocalcin/BGLAP. Acts as an inhibitor of glucose sensing in pancreatic beta cells by acting as a transcription repressor and suppressing expression of PDX1. In hepatocytes, promotes gluconeogenesis by acting together with PPARGC1A and CEBPA to activate the expression of genes such as IGFBP1, G6PC1 and PCK1. Also promotes gluconeogenesis by directly promoting expression of PPARGC1A and G6PC1. Important regulator of cell death acting downstream of CDK1, PKB/AKT1 and STK4/MST1. Promotes neural cell death. Mediates insulin action on adipose tissue. Regulates the expression of adipogenic genes such as PPARG during preadipocyte differentiation and, adipocyte size and adipose tissue-specific gene expression in response to excessive calorie intake. Regulates the transcriptional activity of GADD45A and repair of nitric oxide-damaged DNA in beta-cells. Required for the autophagic cell death induction in response to starvation or oxidative stress in a transcription-independent manner. Mediates the function of MLIP in cardiomyocytes hypertrophy and cardiac remodeling. Positive regulator of apoptosis in cardiac smooth muscle cells as a result of its transcriptional activation of pro-apoptotic genes. Regulates endothelial cell (EC) viability and apoptosis in a PPIA/CYPA-dependent manner via transcription of CCL2 and BCL2L11 which are involved in EC chemotaxis and apoptosis. The sequence is that of Forkhead box protein O1 (FOXO1) from Sus scrofa (Pig).